The sequence spans 818 residues: Histone H2A deubiquitinase MYSM1 (818 aa).

In terms of domain architecture, SANT spans 107 to 158; the sequence is SSPVKWTKEEKNLFEQGLATFGRRWTSIARLIGSRSVLQVKNYARHYFKNKC. The SWIRM domain maps to 344 to 442; sequence IKPPDQELEI…FGCEQAIYNR (99 aa). The region spanning 548–680 is the MPN domain; that stretch reads VKVSCEAMLV…PHPQSQVACL (133 aa). His627, His629, and Asp640 together coordinate Zn(2+). Positions 627-640 match the JAMM motif motif; it reads HSHPAFDPNPSIRD. The short motif at 745 to 749 is the LXXLL motif element; the sequence is LQKLL.

It belongs to the peptidase M67A family. MYSM1 subfamily.

It localises to the nucleus. Functionally, metalloprotease that specifically deubiquitinates monoubiquitinated histone H2A, a specific tag for epigenetic transcriptional repression, thereby acting as a coactivator. Preferentially deubiquitinates monoubiquitinated H2A in hyperacetylated nucleosomes. Deubiquitination of histone H2A leads to facilitate the phosphorylation and dissociation of histone H1 from the nucleosome. Acts as a coactivator by participating in the initiation and elongation steps of androgen receptor (AR)-induced gene activation. This chain is Histone H2A deubiquitinase MYSM1 (mysm1), found in Xenopus laevis (African clawed frog).